Here is a 67-residue protein sequence, read N- to C-terminus: Conotoxin Cal12.1p2 (67 aa).

Residues 1–21 (DLITNSYTRGKPRHVTSWRNL) constitute a propeptide that is removed on maturation.

Post-translationally, contains 4 disulfide bonds. As to expression, expressed by the venom duct.

The protein localises to the secreted. This Californiconus californicus (California cone) protein is Conotoxin Cal12.1p2.